The primary structure comprises 254 residues: 3-deoxy-manno-octulosonate cytidylyltransferase (254 aa).

Belongs to the KdsB family.

It localises to the cytoplasm. The catalysed reaction is 3-deoxy-alpha-D-manno-oct-2-ulosonate + CTP = CMP-3-deoxy-beta-D-manno-octulosonate + diphosphate. Its pathway is nucleotide-sugar biosynthesis; CMP-3-deoxy-D-manno-octulosonate biosynthesis; CMP-3-deoxy-D-manno-octulosonate from 3-deoxy-D-manno-octulosonate and CTP: step 1/1. The protein operates within bacterial outer membrane biogenesis; lipopolysaccharide biosynthesis. Its function is as follows. Activates KDO (a required 8-carbon sugar) for incorporation into bacterial lipopolysaccharide in Gram-negative bacteria. The chain is 3-deoxy-manno-octulosonate cytidylyltransferase from Pseudomonas fluorescens (strain SBW25).